The following is a 334-amino-acid chain: Methionine adenosyltransferase 2 subunit beta (334 aa).

NADP(+)-binding positions include 37–40 (TGLL), 60–62 (FRR), 71–72 (NL), C93, R97, Y159, and L185. T309 carries the phosphothreonine modification. The required for interaction with MAT2A stretch occupies residues 319–334 (LWPFLIDKRWRQTVFH).

The protein belongs to the dTDP-4-dehydrorhamnose reductase family. MAT2B subfamily. As to quaternary structure, heterotrimer; composed of a catalytic MAT2A homodimer that binds one regulatory MAT2B chain. Heterohexamer; composed of a central, catalytic MAT2A homotetramer flanked on either side by a regulatory MAT2B chain. NADP binding increases the affinity for MAT2A.

Its pathway is amino-acid biosynthesis; S-adenosyl-L-methionine biosynthesis; S-adenosyl-L-methionine from L-methionine: step 1/1. Regulatory subunit of S-adenosylmethionine synthetase 2, an enzyme that catalyzes the formation of S-adenosylmethionine from methionine and ATP. Regulates MAT2A catalytic activity by changing its kinetic properties, increasing its affinity for L-methionine. Can bind NADP (in vitro). The sequence is that of Methionine adenosyltransferase 2 subunit beta (Mat2b) from Mus musculus (Mouse).